We begin with the raw amino-acid sequence, 570 residues long: Proline--tRNA ligase (570 aa).

Residues 238–257 (ARPAPAEHAEPRPLEKVETP) are disordered.

It belongs to the class-II aminoacyl-tRNA synthetase family. ProS type 1 subfamily. In terms of assembly, homodimer.

Its subcellular location is the cytoplasm. The catalysed reaction is tRNA(Pro) + L-proline + ATP = L-prolyl-tRNA(Pro) + AMP + diphosphate. Catalyzes the attachment of proline to tRNA(Pro) in a two-step reaction: proline is first activated by ATP to form Pro-AMP and then transferred to the acceptor end of tRNA(Pro). As ProRS can inadvertently accommodate and process non-cognate amino acids such as alanine and cysteine, to avoid such errors it has two additional distinct editing activities against alanine. One activity is designated as 'pretransfer' editing and involves the tRNA(Pro)-independent hydrolysis of activated Ala-AMP. The other activity is designated 'posttransfer' editing and involves deacylation of mischarged Ala-tRNA(Pro). The misacylated Cys-tRNA(Pro) is not edited by ProRS. This chain is Proline--tRNA ligase, found in Geobacter sulfurreducens (strain ATCC 51573 / DSM 12127 / PCA).